A 438-amino-acid chain; its full sequence is Vasoactive intestinal polypeptide receptor 2 (438 aa).

The signal sequence occupies residues 1–23 (MRTLLPPALLTCWLLAPVNSIHP). Residues 24-124 (ECRFHLEIQE…EDESKITFYI (101 aa)) lie on the Extracellular side of the membrane. Cystine bridges form between Cys38–Cys61, Cys52–Cys93, and Cys75–Cys109. N-linked (GlcNAc...) asparagine glycosylation is found at Asn58, Asn88, and Asn92. A helical membrane pass occupies residues 125 to 150 (LVKAIYTLGYSVSLMSLATGSIILCL). The Cytoplasmic segment spans residues 151 to 158 (FRKLHCTR). The chain crosses the membrane as a helical span at residues 159–180 (NYIHLNLFLSFILRAISVLVKD). At 181 to 203 (DVLYSSSGTLHCPDQPSSWVGCK) the chain is on the extracellular side. Residues Cys202 and Cys271 are joined by a disulfide bond. Residues 204–228 (LSLVFLQYCIMANFFWLLVEGLYLH) form a helical membrane-spanning segment. Residues 229-239 (TLLVAMLPPRR) are Cytoplasmic-facing. Residues 240–261 (CFLAYLLIGWGLPTVCIGAWTA) form a helical membrane-spanning segment. At 262–280 (ARLYLEDTGCWDTNDHSVP) the chain is on the extracellular side. A helical membrane pass occupies residues 281-304 (WWVIRIPILISIIVNFVLFISIIR). At 305 to 325 (ILLQKLTSPDVGGNDQSQYKR) the chain is on the cytoplasmic side. The helical transmembrane segment at 326–346 (LAKSTLLLIPLFGVHYMVFAV) threads the bilayer. Residues 347–354 (FPISISSK) are Extracellular-facing. Residues 355 to 378 (YQILFELCLGSFQGLVVAVLYCFL) form a helical membrane-spanning segment. Residues 379–438 (NSEVQCELKRKWRSRCPTPSASRDYRVCGSSFSRNGSEGALQFHRGSRAQSFLQTETSVI) are Cytoplasmic-facing.

This sequence belongs to the G-protein coupled receptor 2 family. As to quaternary structure, interacts with ADCYAP1/PACAP (via N-terminal extracellular domain); activated by PACAP27 and CAPAC38 neuropeptides. Interacts with VIP; the interaction results in VIPR1 activation. Expressed in CD4+ T-cells, but not in CD8+ T-cells. Expressed in the T-cell lines Jurkat, Peer, MOLT-4, HSB, YT and SUP-T1, but not in the T-cell lines HARRIS and HuT 78.

It is found in the cell membrane. G protein-coupled receptor activated by the neuropeptides vasoactive intestinal peptide (VIP) and pituitary adenylate cyclase-activating polypeptide (ADCYAP1/PACAP). Binds VIP and both PACAP27 and PACAP38 bioactive peptides with the following order of potency PACAP38 = VIP &gt; PACAP27. Ligand binding causes a conformation change that triggers signaling via guanine nucleotide-binding proteins (G proteins) and modulates the activity of downstream effectors. Activates cAMP-dependent pathway. May be coupled to phospholipase C. The polypeptide is Vasoactive intestinal polypeptide receptor 2 (Homo sapiens (Human)).